The primary structure comprises 379 residues: Homoserine O-acetyltransferase (379 aa).

The segment at 1–24 (MSHDTTPPLPATGAWREGDPPGDR) is disordered. Residues 60–365 (NAVLVLHALT…ASGHDGFLTE (306 aa)) enclose the AB hydrolase-1 domain. Ser165 (nucleophile) is an active-site residue. Arg236 contributes to the substrate binding site. Catalysis depends on residues Asp329 and His359. Asp360 serves as a coordination point for substrate.

This sequence belongs to the AB hydrolase superfamily. MetX family. In terms of assembly, homodimer.

It is found in the cytoplasm. It carries out the reaction L-homoserine + acetyl-CoA = O-acetyl-L-homoserine + CoA. The protein operates within amino-acid biosynthesis; L-methionine biosynthesis via de novo pathway; O-acetyl-L-homoserine from L-homoserine: step 1/1. In terms of biological role, transfers an acetyl group from acetyl-CoA to L-homoserine, forming acetyl-L-homoserine. This is Homoserine O-acetyltransferase from Thermobifida fusca (strain YX).